The sequence spans 548 residues: Probable malate:quinone oxidoreductase (548 aa).

The disordered stretch occupies residues 522–548; the sequence is KPQAADSTPKAQLKPQPARKEVADIAL. The segment covering 539–548 has biased composition (basic and acidic residues); it reads ARKEVADIAL.

This sequence belongs to the MQO family. It depends on FAD as a cofactor.

It carries out the reaction (S)-malate + a quinone = a quinol + oxaloacetate. It functions in the pathway carbohydrate metabolism; tricarboxylic acid cycle; oxaloacetate from (S)-malate (quinone route): step 1/1. The sequence is that of Probable malate:quinone oxidoreductase from Escherichia fergusonii (strain ATCC 35469 / DSM 13698 / CCUG 18766 / IAM 14443 / JCM 21226 / LMG 7866 / NBRC 102419 / NCTC 12128 / CDC 0568-73).